We begin with the raw amino-acid sequence, 896 residues long: Lipoxygenase 2, chloroplastic (896 aa).

The transit peptide at 1–56 (MYCRESLSSLQTLNVAKSLSSLFPKQSALINPISAGRRNNLPRPNLRRRCKVTASR) directs the protein to the chloroplast. The PLAT domain maps to 79 to 199 (ITAQEEFLEG…VDPTKRIFFS (121 aa)). Positions 175-232 (GSITFTCESWVAPKSVDPTKRIFFSDKSYLPSQTPEPLKKYRKEELETLQGKNREEVG) are EIF4E2 binding. Positions 202–896 (SYLPSQTPEP…GMGVPYSISI (695 aa)) constitute a Lipoxygenase domain. The Fe cation site is built by His554, His559, His746, Asn750, and Ile896.

The protein belongs to the lipoxygenase family. Interacts with EIF4E2. The cofactor is Fe cation. As to expression, in leaves and inflorescences but not abundant in seeds, roots and stems.

It is found in the plastid. The protein resides in the chloroplast. Its subcellular location is the cytoplasm. It catalyses the reaction (9Z,12Z)-octadecadienoate + O2 = (13S)-hydroperoxy-(9Z,11E)-octadecadienoate. The catalysed reaction is (9Z,12Z,15Z)-octadecatrienoate + O2 = (13S)-hydroperoxy-(9Z,11E,15Z)-octadecatrienoate. It functions in the pathway lipid metabolism; oxylipin biosynthesis. 13S-lipoxygenase that can use linolenic acid as substrates. Plant lipoxygenases may be involved in a number of diverse aspects of plant physiology including growth and development, pest resistance, and senescence or responses to wounding. Catalyzes the hydroperoxidation of lipids containing a cis,cis-1,4-pentadiene structure. Required for the wound-induced synthesis of jasmonic acid (JA) in leaves. This is Lipoxygenase 2, chloroplastic (LOX2) from Arabidopsis thaliana (Mouse-ear cress).